The chain runs to 311 residues: Probable dihydroorotate dehydrogenase A (fumarate) (311 aa).

Substrate is bound by residues K45, 69–73 (NSMGL), and N128. 45-46 (KT) is an FMN binding site. N128 serves as a coordination point for FMN. C131 acts as the Nucleophile in catalysis. 2 residues coordinate FMN: K165 and V193. Residue 194–195 (NS) participates in substrate binding. Residues G220, 248–249 (GG), and 270–271 (GT) each bind FMN.

The protein belongs to the dihydroorotate dehydrogenase family. Type 1 subfamily. As to quaternary structure, homodimer. FMN serves as cofactor.

The protein resides in the cytoplasm. It catalyses the reaction (S)-dihydroorotate + fumarate = orotate + succinate. It functions in the pathway pyrimidine metabolism; UMP biosynthesis via de novo pathway. Functionally, catalyzes the conversion of dihydroorotate to orotate with fumarate as the electron acceptor. The sequence is that of Probable dihydroorotate dehydrogenase A (fumarate) (pyrDA) from Streptococcus pneumoniae (strain ATCC BAA-255 / R6).